The following is a 434-amino-acid chain: Vi polysaccharide export inner-membrane protein VexD (434 aa).

Basic and acidic residues predominate over residues 1-50; the sequence is MENSERIKKWKEERAKVAQESRASRLQQKEDERALRQTEKSADAKSHHNP. The interval 1-58 is disordered; the sequence is MENSERIKKWKEERAKVAQESRASRLQQKEDERALRQTEKSADAKSHHNPDAGWSATD. The next 2 membrane-spanning stretches (helical) occupy residues 84–104 and 409–429; these read LFLY…ILTS and WLLF…LITI.

This sequence belongs to the BexC/CtrB/KpsE family.

Its subcellular location is the cell inner membrane. Functionally, may form an ATP-driven capsule polysaccharide export apparatus, in association with the VexA, VexB and VexC proteins. The protein is Vi polysaccharide export inner-membrane protein VexD (vexD) of Salmonella typhi.